The chain runs to 273 residues: Ribosomal RNA small subunit methyltransferase A (273 aa).

Positions 18, 20, 45, 66, 91, and 113 each coordinate S-adenosyl-L-methionine.

Belongs to the class I-like SAM-binding methyltransferase superfamily. rRNA adenine N(6)-methyltransferase family. RsmA subfamily.

It is found in the cytoplasm. The enzyme catalyses adenosine(1518)/adenosine(1519) in 16S rRNA + 4 S-adenosyl-L-methionine = N(6)-dimethyladenosine(1518)/N(6)-dimethyladenosine(1519) in 16S rRNA + 4 S-adenosyl-L-homocysteine + 4 H(+). Its function is as follows. Specifically dimethylates two adjacent adenosines (A1518 and A1519) in the loop of a conserved hairpin near the 3'-end of 16S rRNA in the 30S particle. May play a critical role in biogenesis of 30S subunits. This is Ribosomal RNA small subunit methyltransferase A from Klebsiella pneumoniae (strain 342).